Reading from the N-terminus, the 469-residue chain is Trigger factor (469 aa).

Positions 165–250 (GDRVTIDYIG…VKAVCKSDEL (86 aa)) constitute a PPIase FKBP-type domain. Over residues 444–460 (DLTEKKPLKKKTAEKVS) the composition is skewed to basic and acidic residues. The segment at 444–469 (DLTEKKPLKKKTAEKVSTKKKAPKKS) is disordered.

The protein belongs to the FKBP-type PPIase family. Tig subfamily.

The protein localises to the cytoplasm. It catalyses the reaction [protein]-peptidylproline (omega=180) = [protein]-peptidylproline (omega=0). Functionally, involved in protein export. Acts as a chaperone by maintaining the newly synthesized protein in an open conformation. Functions as a peptidyl-prolyl cis-trans isomerase. The protein is Trigger factor of Bartonella henselae (strain ATCC 49882 / DSM 28221 / CCUG 30454 / Houston 1) (Rochalimaea henselae).